A 394-amino-acid polypeptide reads, in one-letter code: Elongation factor Tu 1 (394 aa).

In terms of domain architecture, tr-type G spans 10-204 (KPHVNVGTIG…ALDTYIPEPE (195 aa)). The G1 stretch occupies residues 19-26 (GHVDHGKT). 19-26 (GHVDHGKT) is a GTP binding site. Threonine 26 lines the Mg(2+) pocket. The tract at residues 60–64 (GITIS) is G2. The tract at residues 81-84 (DCPG) is G3. GTP is bound by residues 81-85 (DCPGH) and 136-139 (NKCD). The tract at residues 136–139 (NKCD) is G4. Positions 174 to 176 (SAL) are G5.

Belongs to the TRAFAC class translation factor GTPase superfamily. Classic translation factor GTPase family. EF-Tu/EF-1A subfamily. Monomer.

The protein localises to the cytoplasm. It catalyses the reaction GTP + H2O = GDP + phosphate + H(+). Functionally, GTP hydrolase that promotes the GTP-dependent binding of aminoacyl-tRNA to the A-site of ribosomes during protein biosynthesis. In Vibrio vulnificus (strain CMCP6), this protein is Elongation factor Tu 1.